Here is a 554-residue protein sequence, read N- to C-terminus: 3-(3-hydroxy-phenyl)propionate/3-hydroxycinnamic acid hydroxylase (554 aa).

FAD-binding positions include 17–46 (QVAIVGAGPVGLMMANYLGQMGISVLVVEK) and 285–295 (FRINRVLLAGD).

Belongs to the PheA/TfdB FAD monooxygenase family. FAD serves as cofactor.

It catalyses the reaction 3-(3-hydroxyphenyl)propanoate + NADH + O2 + H(+) = 3-(2,3-dihydroxyphenyl)propanoate + NAD(+) + H2O. The enzyme catalyses (2E)-3-(3-hydroxyphenyl)prop-2-enoate + NADH + O2 + H(+) = (2E)-3-(2,3-dihydroxyphenyl)prop-2-enoate + NAD(+) + H2O. It participates in aromatic compound metabolism; 3-phenylpropanoate degradation. Functionally, catalyzes the insertion of one atom of molecular oxygen into position 2 of the phenyl ring of 3-(3-hydroxyphenyl)propionate (3-HPP) and hydroxycinnamic acid (3HCI). The polypeptide is 3-(3-hydroxy-phenyl)propionate/3-hydroxycinnamic acid hydroxylase (Klebsiella pneumoniae subsp. pneumoniae (strain ATCC 700721 / MGH 78578)).